A 999-amino-acid chain; its full sequence is Tyrosine-protein kinase Mer (999 aa).

Residues 1 to 20 (MGPAPLPLLLGLFLPALWRR) form the signal peptide. The Extracellular portion of the chain corresponds to 21 to 505 (AITEAREEAK…PGNADPVLII (485 aa)). Ig-like C2-type domains lie at 81-186 (PQVT…EIVS) and 197-273 (PHFT…LTVS). N-linked (GlcNAc...) asparagine glycans are attached at residues Asn114, Asn170, Asn207, Asn215, Asn234, Asn294, Asn316, Asn329, Asn336, Asn354, Asn389, Asn395, Asn442, and Asn454. The cysteines at positions 115 and 175 are disulfide-linked. A disulfide bridge links Cys218 with Cys262. 2 consecutive Fibronectin type-III domains span residues 286–381 (PPTE…TTEG) and 386–484 (APLN…PAHG). Residues 506-526 (FGCFCGFILIGLILYISLAIR) form a helical membrane-spanning segment. Residues 527–999 (KRVQETKFGN…DSSEGSEVLM (473 aa)) lie on the Cytoplasmic side of the membrane. Phosphoserine is present on Ser543. Residues 587-858 (LILGKILGEG…VLRLQLEKLL (272 aa)) form the Protein kinase domain. ATP is bound by residues 593–601 (LGEGEFGSV) and Lys615. Catalysis depends on Asp723, which acts as the Proton acceptor. Residues Tyr749, Tyr753, Tyr754, and Tyr872 each carry the phosphotyrosine; by autocatalysis modification. Phosphoserine is present on Ser935.

Belongs to the protein kinase superfamily. Tyr protein kinase family. AXL/UFO subfamily. As to quaternary structure, interacts (upon activation) with TNK2; stimulates TNK2 autophosphorylation. Interacts (via N-terminus) with extracellular ligands LGALS3, TUB, TULP1 and GAS6. Interacts with VAV1 in a phosphotyrosine-independent manner. Interacts with TIMD4; this interaction enhances TIMD4-mediated efferocytosis. Post-translationally, autophosphorylated on Tyr-749, Tyr-753 and Tyr-754 in the activation loop allowing full activity. Autophosphorylated on Tyr-872 leading to recruitment of downstream partners of the signaling cascade such as PLCG2. Not expressed in normal B- and T-lymphocytes but is expressed in numerous neoplastic B- and T-cell lines. Highly expressed in testis, ovary, prostate, lung, and kidney, with lower expression in spleen, small intestine, colon, and liver.

It is found in the cell membrane. It carries out the reaction L-tyrosyl-[protein] + ATP = O-phospho-L-tyrosyl-[protein] + ADP + H(+). Functionally, receptor tyrosine kinase that transduces signals from the extracellular matrix into the cytoplasm by binding to several ligands including LGALS3, TUB, TULP1 or GAS6. Regulates many physiological processes including cell survival, migration, differentiation, and phagocytosis of apoptotic cells (efferocytosis). Ligand binding at the cell surface induces autophosphorylation of MERTK on its intracellular domain that provides docking sites for downstream signaling molecules. Following activation by ligand, interacts with GRB2 or PLCG2 and induces phosphorylation of MAPK1, MAPK2, FAK/PTK2 or RAC1. MERTK signaling plays a role in various processes such as macrophage clearance of apoptotic cells, platelet aggregation, cytoskeleton reorganization and engulfment. Functions in the retinal pigment epithelium (RPE) as a regulator of rod outer segments fragments phagocytosis. Also plays an important role in inhibition of Toll-like receptors (TLRs)-mediated innate immune response by activating STAT1, which selectively induces production of suppressors of cytokine signaling SOCS1 and SOCS3. This is Tyrosine-protein kinase Mer (MERTK) from Homo sapiens (Human).